Reading from the N-terminus, the 870-residue chain is Glycerol-3-phosphate acyltransferase (870 aa).

The interval 1–27 (MPKKNSPLLPKETTPTQSSVDTSGSSN) is disordered. Over residues 13–27 (TTPTQSSVDTSGSSN) the composition is skewed to polar residues. The HXXXXD motif motif lies at 351–356 (HRSHID).

The protein belongs to the GPAT/DAPAT family.

The protein resides in the cell inner membrane. The enzyme catalyses sn-glycerol 3-phosphate + an acyl-CoA = a 1-acyl-sn-glycero-3-phosphate + CoA. It participates in phospholipid metabolism; CDP-diacylglycerol biosynthesis; CDP-diacylglycerol from sn-glycerol 3-phosphate: step 1/3. This chain is Glycerol-3-phosphate acyltransferase (plsB), found in Xylella fastidiosa (strain 9a5c).